The following is a 570-amino-acid chain: Conserved oligomeric Golgi complex subunit 8 (570 aa).

It belongs to the COG8 family. Component of the conserved oligomeric Golgi complex which is composed of eight different subunits and is required for normal Golgi morphology and localization.

The protein localises to the golgi apparatus membrane. Its function is as follows. Required for normal Golgi function. In Drosophila melanogaster (Fruit fly), this protein is Conserved oligomeric Golgi complex subunit 8.